Reading from the N-terminus, the 705-residue chain is Ribosomal RNA large subunit methyltransferase K/L (705 aa).

In terms of domain architecture, THUMP spans 43 to 154 (LMYQSLMWSR…KDTASIALDL (112 aa)).

It belongs to the methyltransferase superfamily. RlmKL family.

The protein localises to the cytoplasm. The enzyme catalyses guanosine(2445) in 23S rRNA + S-adenosyl-L-methionine = N(2)-methylguanosine(2445) in 23S rRNA + S-adenosyl-L-homocysteine + H(+). The catalysed reaction is guanosine(2069) in 23S rRNA + S-adenosyl-L-methionine = N(2)-methylguanosine(2069) in 23S rRNA + S-adenosyl-L-homocysteine + H(+). Specifically methylates the guanine in position 2445 (m2G2445) and the guanine in position 2069 (m7G2069) of 23S rRNA. This is Ribosomal RNA large subunit methyltransferase K/L from Erwinia tasmaniensis (strain DSM 17950 / CFBP 7177 / CIP 109463 / NCPPB 4357 / Et1/99).